A 212-amino-acid polypeptide reads, in one-letter code: Pyridoxine/pyridoxamine 5'-phosphate oxidase (212 aa).

Residues 57-62 (RMVLLK), 72-73 (YT), Arg78, Lys79, and Gln101 each bind FMN. Lys62 serves as a coordination point for substrate. Positions 119, 123, and 127 each coordinate substrate. Residues 136 to 137 (QS) and Trp181 contribute to the FMN site. 187–189 (RLH) is a binding site for substrate. Residue Arg191 coordinates FMN.

This sequence belongs to the pyridoxamine 5'-phosphate oxidase family. Homodimer. FMN is required as a cofactor.

The enzyme catalyses pyridoxamine 5'-phosphate + O2 + H2O = pyridoxal 5'-phosphate + H2O2 + NH4(+). The catalysed reaction is pyridoxine 5'-phosphate + O2 = pyridoxal 5'-phosphate + H2O2. Its pathway is cofactor metabolism; pyridoxal 5'-phosphate salvage; pyridoxal 5'-phosphate from pyridoxamine 5'-phosphate: step 1/1. It functions in the pathway cofactor metabolism; pyridoxal 5'-phosphate salvage; pyridoxal 5'-phosphate from pyridoxine 5'-phosphate: step 1/1. Its function is as follows. Catalyzes the oxidation of either pyridoxine 5'-phosphate (PNP) or pyridoxamine 5'-phosphate (PMP) into pyridoxal 5'-phosphate (PLP). This is Pyridoxine/pyridoxamine 5'-phosphate oxidase from Erythrobacter litoralis (strain HTCC2594).